A 151-amino-acid chain; its full sequence is UPF0208 membrane protein YfbV (151 aa).

Transmembrane regions (helical) follow at residues 46 to 65 and 69 to 91; these read YAIR…QIAL and LGPA…WWLG.

The protein belongs to the UPF0208 family.

The protein resides in the cell inner membrane. In Escherichia coli O1:K1 / APEC, this protein is UPF0208 membrane protein YfbV.